We begin with the raw amino-acid sequence, 138 residues long: Protein FAM136A (138 aa).

Ala-2 carries the N-acetylalanine modification. Phosphothreonine is present on residues Thr-124 and Thr-126.

The protein belongs to the FAM136 family.

The polypeptide is Protein FAM136A (Fam136a) (Mus musculus (Mouse)).